The following is a 303-amino-acid chain: Guanosine-inosine kinase (303 aa).

This sequence belongs to the carbohydrate kinase PfkB family. Homodimer. Mg(2+) serves as cofactor.

The catalysed reaction is guanosine + ATP = GMP + ADP + H(+). It carries out the reaction inosine + ATP = IMP + ADP + H(+). It functions in the pathway purine metabolism; IMP biosynthesis via salvage pathway; IMP from inosine: step 1/1. It participates in purine metabolism; GMP biosynthesis via salvage pathway. Kinase activity is stimulated by pyrimidine nucleotides, especially CMP and CTP, and inhibited by AMP, ADP and GMP. Activity is stimulated by potassium or ammonium ions. In terms of biological role, catalyzes the phosphorylation of guanosine and inosine to GMP and IMP, respectively. Can also use deoxyguanosine. Shows a strong preference for guanosine. dATP, GTP and dGTP can serve as phosphate donors. The sequence is that of Guanosine-inosine kinase from Exiguobacterium acetylicum (Brevibacterium acetylicum).